The following is a 429-amino-acid chain: Glutamate-1-semialdehyde 2,1-aminomutase 2 (429 aa).

Lys-267 bears the N6-(pyridoxal phosphate)lysine mark.

It belongs to the class-III pyridoxal-phosphate-dependent aminotransferase family. HemL subfamily. In terms of assembly, homodimer. The cofactor is pyridoxal 5'-phosphate.

The protein localises to the cytoplasm. It carries out the reaction (S)-4-amino-5-oxopentanoate = 5-aminolevulinate. Its pathway is porphyrin-containing compound metabolism; protoporphyrin-IX biosynthesis; 5-aminolevulinate from L-glutamyl-tRNA(Glu): step 2/2. The sequence is that of Glutamate-1-semialdehyde 2,1-aminomutase 2 from Brevibacillus brevis (strain 47 / JCM 6285 / NBRC 100599).